Consider the following 264-residue polypeptide: Rhodanese-like domain-containing protein 4A, chloroplastic (264 aa).

The N-terminal 60 residues, 1–60 (MTSLPIILASSPLRNLTKPCSTSQIPKPIQNSTKQPPIHLLTKTNLSVTISQLIITSPVL), are a transit peptide targeting the chloroplast. The chain crosses the membrane as a helical span at residues 95-115 (FFVAGCTFTYLVVYPAVMFYL). Positions 132 to 232 (NESDSQLLDI…ARGKNGWLAI (101 aa)) constitute a Rhodanese domain.

It localises to the plastid. The protein localises to the chloroplast. It is found in the membrane. In Arabidopsis thaliana (Mouse-ear cress), this protein is Rhodanese-like domain-containing protein 4A, chloroplastic (STR4A).